The sequence spans 535 residues: MTKFIFVTGGVVSSLGKGITAASLGRLLKSRGLKVAIQKFDPYINVDPGTMSPYQHGEVFVTDDGAETDLDLGHYERFIDINLTKNSNVTTGKVYWAVISKERRGDYLGGTVQVIPHITNEIKERILRVAKESNPDVVITEIGGTVGDIESLPFLEAIRQLKNDVGKDNVLYIHVTLVPTLRVTGELKTKPTQHSVKELRSIGIQPDIIVARSEQPLSREITEKIALFCDIDKNAVIQAVDASNIYEVPLKLKEEGLDDIVIKKLGLTCGEPDLSEWEQIVERYKNPKFEVTIGIVGKYVSLPDAYLSVAEALRHAGIYHETRVNIRWIDSEMLEKEPVEKYLSNLDGILVPGGFGDRGVEGKIKAIQYARENKVPYLGLCLGMQTAVIEFARNVAGLKDANSSEFKPDGPHSVIDLLPEQKEVEQLGGTMRLGLYPCKLVPGTKAHAAYGEEIIYERHRHRYEFNNEYRELLTGLGLVISGTSPDGRLVEIIELSDHPWFVATQFHPEFKSRPNRPHPLFREFIGASLKTNKLF.

The interval 1-267 (MTKFIFVTGG…DDIVIKKLGL (267 aa)) is amidoligase domain. Position 13 (S13) interacts with CTP. S13 is a UTP binding site. An ATP-binding site is contributed by 14–19 (SLGKGI). Y54 contacts L-glutamine. D71 is an ATP binding site. D71 and E141 together coordinate Mg(2+). CTP-binding positions include 148 to 150 (DIE), 188 to 193 (KTKPTQ), and K224. UTP is bound by residues 188-193 (KTKPTQ) and K224. The Glutamine amidotransferase type-1 domain occupies 292–534 (TIGIVGKYVS…IGASLKTNKL (243 aa)). G354 lines the L-glutamine pocket. C381 functions as the Nucleophile; for glutamine hydrolysis in the catalytic mechanism. L-glutamine is bound by residues 382–385 (LGMQ), E405, and R462. Residues H507 and E509 contribute to the active site.

It belongs to the CTP synthase family. As to quaternary structure, homotetramer.

It carries out the reaction UTP + L-glutamine + ATP + H2O = CTP + L-glutamate + ADP + phosphate + 2 H(+). The catalysed reaction is L-glutamine + H2O = L-glutamate + NH4(+). The enzyme catalyses UTP + NH4(+) + ATP = CTP + ADP + phosphate + 2 H(+). It functions in the pathway pyrimidine metabolism; CTP biosynthesis via de novo pathway; CTP from UDP: step 2/2. Allosterically activated by GTP, when glutamine is the substrate; GTP has no effect on the reaction when ammonia is the substrate. The allosteric effector GTP functions by stabilizing the protein conformation that binds the tetrahedral intermediate(s) formed during glutamine hydrolysis. Inhibited by the product CTP, via allosteric rather than competitive inhibition. Its function is as follows. Catalyzes the ATP-dependent amination of UTP to CTP with either L-glutamine or ammonia as the source of nitrogen. Regulates intracellular CTP levels through interactions with the four ribonucleotide triphosphates. This is CTP synthase from Carboxydothermus hydrogenoformans (strain ATCC BAA-161 / DSM 6008 / Z-2901).